The primary structure comprises 383 residues: Chaperone protein DnaJ (383 aa).

Residues 5–70 form the J domain; sequence DYYELLGVSR…QKRAAYDRFG (66 aa). The CR-type zinc finger occupies 140–219; that stretch reads GTKTEIRVPT…CSGAGTVPRE (80 aa). Zn(2+)-binding residues include C153, C156, C171, C174, C193, C196, C207, and C210. CXXCXGXG motif repeat units lie at residues 153–160, 171–178, 193–200, and 207–214; these read CDACSGTG, CPTCGGAG, and CRVCSGAG.

This sequence belongs to the DnaJ family. In terms of assembly, homodimer. It depends on Zn(2+) as a cofactor.

It localises to the cytoplasm. Functionally, participates actively in the response to hyperosmotic and heat shock by preventing the aggregation of stress-denatured proteins and by disaggregating proteins, also in an autonomous, DnaK-independent fashion. Unfolded proteins bind initially to DnaJ; upon interaction with the DnaJ-bound protein, DnaK hydrolyzes its bound ATP, resulting in the formation of a stable complex. GrpE releases ADP from DnaK; ATP binding to DnaK triggers the release of the substrate protein, thus completing the reaction cycle. Several rounds of ATP-dependent interactions between DnaJ, DnaK and GrpE are required for fully efficient folding. Also involved, together with DnaK and GrpE, in the DNA replication of plasmids through activation of initiation proteins. The chain is Chaperone protein DnaJ from Acidiphilium cryptum (strain JF-5).